The following is a 487-amino-acid chain: Glutamate--tRNA ligase 2 (487 aa).

A 'HIGH' region motif is present at residues 31–41 (PSPTGHLHVGG). The short motif at 254-258 (PLSKR) is the 'KMSKS' region element. Residue Lys-257 participates in ATP binding.

This sequence belongs to the class-I aminoacyl-tRNA synthetase family. Glutamate--tRNA ligase type 1 subfamily. In terms of assembly, monomer.

It localises to the cytoplasm. The catalysed reaction is tRNA(Glu) + L-glutamate + ATP = L-glutamyl-tRNA(Glu) + AMP + diphosphate. Catalyzes the attachment of glutamate to tRNA(Glu) in a two-step reaction: glutamate is first activated by ATP to form Glu-AMP and then transferred to the acceptor end of tRNA(Glu). This is Glutamate--tRNA ligase 2 from Thermotoga maritima (strain ATCC 43589 / DSM 3109 / JCM 10099 / NBRC 100826 / MSB8).